Reading from the N-terminus, the 484-residue chain is Magnesium transporter MRS2-3 (484 aa).

Disordered regions lie at residues 1–40 (MRGA…GRKK) and 141–186 (TKPQ…QSLE). Residues 10–24 (NFSTNPSTPNTGQPT) are compositionally biased toward polar residues. A coiled-coil region spans residues 203–275 (ACLEAASSSL…LLDDDEDMAE (73 aa)). The interval 286 to 320 (LEDSSNSSMNESDTFEVDLPQGDEDDRLPPEFASE) is disordered. A compositionally biased stretch (acidic residues) spans 298-311 (DTFEVDLPQGDEDD). A helical membrane pass occupies residues 416–436 (GVMLTTATLVMSAFIAVAGVF). Residues 437–439 (GMN) carry the Required for magnesium transport activity motif. The chain crosses the membrane as a helical span at residues 455 to 475 (FIWTVIGGSIGSICLYVGAIG).

Belongs to the CorA metal ion transporter (MIT) (TC 1.A.35.5) family. Expressed in the whole plant.

It localises to the membrane. Magnesium transporter that may mediate the influx of magnesium. The sequence is that of Magnesium transporter MRS2-3 (MRS2-3) from Arabidopsis thaliana (Mouse-ear cress).